We begin with the raw amino-acid sequence, 231 residues long: 2,3-bisphosphoglycerate-dependent phosphoglycerate mutase (231 aa).

Substrate-binding positions include 10–17 (RHGQSEWN), 23–24 (TG), arginine 62, 89–92 (ERHY), lysine 100, 116–117 (RR), and 185–186 (GN). The active-site Tele-phosphohistidine intermediate is histidine 11. The active-site Proton donor/acceptor is glutamate 89.

The protein belongs to the phosphoglycerate mutase family. BPG-dependent PGAM subfamily. In terms of assembly, homodimer.

The enzyme catalyses (2R)-2-phosphoglycerate = (2R)-3-phosphoglycerate. Its pathway is carbohydrate degradation; glycolysis; pyruvate from D-glyceraldehyde 3-phosphate: step 3/5. Catalyzes the interconversion of 2-phosphoglycerate and 3-phosphoglycerate. In Buchnera aphidicola subsp. Acyrthosiphon pisum (strain APS) (Acyrthosiphon pisum symbiotic bacterium), this protein is 2,3-bisphosphoglycerate-dependent phosphoglycerate mutase.